The sequence spans 420 residues: Probable serine hydroxymethyltransferase (420 aa).

Residues Leu121 and 125 to 127 (GHL) contribute to the (6S)-5,6,7,8-tetrahydrofolate site. Lys230 carries the post-translational modification N6-(pyridoxal phosphate)lysine. Residues Glu246 and 354-356 (SPF) each bind (6S)-5,6,7,8-tetrahydrofolate.

Belongs to the SHMT family. Homodimer. Requires pyridoxal 5'-phosphate as cofactor.

The protein localises to the cytoplasm. The catalysed reaction is (6R)-5,10-methylene-5,6,7,8-tetrahydrofolate + glycine + H2O = (6S)-5,6,7,8-tetrahydrofolate + L-serine. The protein operates within one-carbon metabolism; tetrahydrofolate interconversion. In terms of biological role, catalyzes the reversible interconversion of serine and glycine with tetrahydrofolate (THF) serving as the one-carbon carrier. This reaction serves as the major source of one-carbon groups required for the biosynthesis of purines, thymidylate, methionine, and other important biomolecules. The protein is Probable serine hydroxymethyltransferase of Rickettsia bellii (strain RML369-C).